The following is a 2527-amino-acid chain: Leucine-rich repeat serine/threonine-protein kinase 2 (2527 aa).

Residues 1–969 are required for RAB29-mediated activation; that stretch reads MASGACQGCE…RSSRLPSHMR (969 aa). Positions 9–33 form a coiled coil; the sequence is CEEEEEEEALKKLIVRLNNVQEGKQ. A phosphoserine mark is found at S910, S935, S955, and S973. The interval 957–979 is disordered; sequence ESLRSSRLPSHMRQSDSSSSLAS. Over residues 961-978 the composition is skewed to low complexity; sequence SSRLPSHMRQSDSSSSLA. 13 LRR repeats span residues 983–1004, 1012–1033, 1036–1057, 1059–1080, 1084–1105, 1108–1129, 1130–1150, 1156–1171, 1174–1196, 1197–1218, 1221–1245, 1246–1267, and 1269–1291; these read HITS…SQKC, HLTK…LCET, CLIH…VLKM, RITN…DPAM, SLKQ…LAQV, KLEQ…LSLK, ELKI…DFLE, ESFS…MPAL, SITS…FSLP, HLRS…AHWK, NLRE…HVWS, RVEK…IGCL, and NLTS…MGKL. S1292 is subject to Phosphoserine; by autocatalysis. A Roc domain is found at 1328 to 1511; sequence KAVPYNRMKL…KTIINESLNF (184 aa). Residue 1341-1348 coordinates GTP; the sequence is GNTGSGKT. S1444 is subject to Phosphoserine. One can recognise a COR domain in the interval 1543-1740; the sequence is TEFPVINRKH…RMYWRQGIYL (198 aa). Residues 1879–2146 form the Protein kinase domain; it reads EAPEFLLGDG…LICLMRHILI (268 aa). The ATP site is built by L1885, D1887, G1888, G1891, V1893, A1904, K1906, M1947, E1948, A1950, S1954, and R1957. D1994 acts as the Proton acceptor in catalysis. ATP is bound by residues H1998, L2001, A2016, and D2017. 2098-2121 contacts GTP; that stretch reads EYGCAPWPMVEKLITKCLKENPQE. WD repeat units follow at residues 2139–2183, 2188–2228, 2233–2276, 2281–2327, 2333–2377, 2402–2438, and 2443–2497; these read CLMR…SLFD, RYSY…LVIN, TKRH…MIFE, KCKG…FSFS, QKLI…EVWD, KESK…LLLD, and RVIR…SIWD. 2295–2298 contacts GTP; that stretch reads DVST.

This sequence belongs to the protein kinase superfamily. TKL Ser/Thr protein kinase family. Homodimer. Homotetramer; when activated by GTP-bound RAB29. Interacts with PRKN, PRDX3 and TPCN2. Interacts with VPS35. Interacts (via N-terminus) with RAB29; this interaction is direct and stimulates kinase activity. Interacts (via ROC domain) with SEC16A. Interacts with APP; interaction promotes phosphorylation of 'Thr-743' of APP. Interacts with MAPT. Interacts with RAB8A, RAB10, and RAB12. Interacts (via N-terminus) with RAB32. Interacts with YWHAG; this interaction is dependent on phosphorylation of Ser-910 and either Ser-935 or Ser-1444. Interacts with SFN; this interaction is dependent on phosphorylation of Ser-910 and/or Ser-935. The cofactor is Mg(2+). In terms of processing, autophosphorylated at Ser-1292. Autophosphorylation is stimulated by RAB29. Phosphorylation of Ser-910 and Ser-935 or Ser-1444 facilitates interaction with YWHAG. Phosphorylation of Ser-910 and/or Ser-935 facilitates interaction with SFN. Post-translationally, ubiquitinated by TRIM1; undergoes 'Lys-48'-linked polyubiquitination leading to proteasomal degradation. As to expression, expressed in the brain (at protein level). Detected throughout the adult brain. Expressed in deep cerebral cortex layers, superficial cingulate cortex layers, the piriform cortex, hippocampal formation, caudate putamen, substantia nigra, the basolateral and basomedial anterior amygdala nuclei, reticular thalamic nucleus and also in the cerebellar granular cell layer. Highly expressed in the striatum, cortex and olfactory tubercle. Little or no expression in the substantia nigra, where dopaminergic neurons preferentially degenerate in Parkinson disease. Expression is particularly high in brain dopaminoceptive areas. High and strikingly specific expression in striatum and parts of cortex and no signals in dopamine neurons.

The protein localises to the cytoplasmic vesicle. The protein resides in the perikaryon. It is found in the cell projection. Its subcellular location is the axon. It localises to the dendrite. The protein localises to the golgi apparatus membrane. The protein resides in the endoplasmic reticulum membrane. It is found in the secretory vesicle. Its subcellular location is the synaptic vesicle membrane. It localises to the endosome. The protein localises to the lysosome. The protein resides in the mitochondrion outer membrane. It is found in the cytoplasm. Its subcellular location is the cytoskeleton. It localises to the phagosome. It carries out the reaction L-threonyl-[protein] + ATP = O-phospho-L-threonyl-[protein] + ADP + H(+). The enzyme catalyses L-seryl-[protein] + ATP = O-phospho-L-seryl-[protein] + ADP + H(+). It catalyses the reaction GTP + H2O = GDP + phosphate + H(+). Kinase activity is regulated by the GTPase activity of the ROC domain. GTP-bound LRRK2 kinase activity is stimulated by RAB29. Phosphorylation of RAB10 'Thr-73' is stimulated by RAB29 and RAB32. Inhibited by small molecule inhibitors MLi-2 and LRRK2-IN-1. Its function is as follows. Serine/threonine-protein kinase which phosphorylates a broad range of proteins involved in multiple processes such as neuronal plasticity, innate immunity, autophagy, and vesicle trafficking. Is a key regulator of RAB GTPases by regulating the GTP/GDP exchange and interaction partners of RABs through phosphorylation. Phosphorylates RAB3A, RAB3B, RAB3C, RAB3D, RAB8A, RAB8B, RAB10, RAB12, RAB29, RAB35, and RAB43. Regulates the RAB3IP-catalyzed GDP/GTP exchange for RAB8A through the phosphorylation of 'Thr-72' on RAB8A. Inhibits the interaction between RAB8A and GDI1 and/or GDI2 by phosphorylating 'Thr-72' on RAB8A. Regulates primary ciliogenesis through phosphorylation of RAB8A and RAB10, which promotes SHH signaling in the brain. Together with RAB29, plays a role in the retrograde trafficking pathway for recycling proteins, such as mannose-6-phosphate receptor (M6PR), between lysosomes and the Golgi apparatus in a retromer-dependent manner. Regulates neuronal process morphology in the intact central nervous system (CNS). Plays an important role in recruiting SEC16A to endoplasmic reticulum exit sites (ERES) and in regulating ER to Golgi vesicle-mediated transport and ERES organization. Positively regulates autophagy through a calcium-dependent activation of the CaMKK/AMPK signaling pathway. The process involves activation of nicotinic acid adenine dinucleotide phosphate (NAADP) receptors, increase in lysosomal pH, and calcium release from lysosomes. Phosphorylates PRDX3. By phosphorylating APP on 'Thr-743', which promotes the production and the nuclear translocation of the APP intracellular domain (AICD), regulates dopaminergic neuron apoptosis. Acts as a positive regulator of innate immunity by mediating phosphorylation of RIPK2 downstream of NOD1 and NOD2, thereby enhancing RIPK2 activation. Independent of its kinase activity, inhibits the proteasomal degradation of MAPT, thus promoting MAPT oligomerization and secretion. In addition, has GTPase activity via its Roc domain which regulates LRKK2 kinase activity. Recruited by RAB29/RAB7L1 to overloaded lysosomes where it phosphorylates and stabilizes RAB8A and RAB10 which promote lysosomal content release and suppress lysosomal enlargement through the EHBP1 and EHBP1L1 effector proteins. The sequence is that of Leucine-rich repeat serine/threonine-protein kinase 2 (Lrrk2) from Mus musculus (Mouse).